Consider the following 336-residue polypeptide: MLFIQDDVYKEYVKMMMNIVILCMILCISLSFWIISITASTYSGSLRPISPWRWLVSVLTPIIIVWHGIKKRSLDNSGALGGLLVGFILTIANYSFFSALLTFFFISSKLTKWKGEVKKCYDSEYKEGGQRNWVQVFCNGGLPAELALLYMIENGPGEIPIDFSKEYTASWMCLSLLGALASSAGDTWASEIGPVLSKSSPRLITTWEKVPVGTNGGVTPVGLISSLLGGTSVGVAYFVTQLIFVPDLEIAAPQWPIVIYGGMAGLLGSLIDSYLGAIMQYSGYDESTGKIVNHPTKEAKFICGKPILDNNAVNLFSSILIALLLPTAAWSFWPRL.

6 helical membrane-spanning segments follow: residues 19–39 (IVIL…SITA), 49–69 (ISPW…WHGI), 86–106 (GFIL…FFFI), 224–244 (ISSL…QLIF), 250–270 (IAAP…LGSL), and 313–333 (VNLF…WSFW).

Belongs to the TMEM19 family.

The protein localises to the membrane. This is Transmembrane protein 19 (tmem19) from Xenopus tropicalis (Western clawed frog).